Here is a 206-residue protein sequence, read N- to C-terminus: Glycerol-3-phosphate acyltransferase (206 aa).

5 helical membrane-spanning segments follow: residues 14–34 (IALA…GLIL), 67–87 (ATLL…GYFL), 91–111 (AAII…WIGF), 124–144 (LLGV…AVAV), and 148–168 (YSSL…LILG).

It belongs to the PlsY family. As to quaternary structure, probably interacts with PlsX.

The protein localises to the cell inner membrane. It carries out the reaction an acyl phosphate + sn-glycerol 3-phosphate = a 1-acyl-sn-glycero-3-phosphate + phosphate. It participates in lipid metabolism; phospholipid metabolism. Functionally, catalyzes the transfer of an acyl group from acyl-phosphate (acyl-PO(4)) to glycerol-3-phosphate (G3P) to form lysophosphatidic acid (LPA). This enzyme utilizes acyl-phosphate as fatty acyl donor, but not acyl-CoA or acyl-ACP. The protein is Glycerol-3-phosphate acyltransferase of Rhizobium etli (strain ATCC 51251 / DSM 11541 / JCM 21823 / NBRC 15573 / CFN 42).